Consider the following 139-residue polypeptide: ATP synthase epsilon chain (139 aa).

Belongs to the ATPase epsilon chain family. As to quaternary structure, F-type ATPases have 2 components, CF(1) - the catalytic core - and CF(0) - the membrane proton channel. CF(1) has five subunits: alpha(3), beta(3), gamma(1), delta(1), epsilon(1). CF(0) has three main subunits: a, b and c.

Its subcellular location is the cell membrane. Functionally, produces ATP from ADP in the presence of a proton gradient across the membrane. This Enterococcus faecalis (strain ATCC 700802 / V583) protein is ATP synthase epsilon chain.